A 141-amino-acid chain; its full sequence is Lutropin subunit beta (141 aa).

A signal peptide spans 1–20 (MEMLQGLLLWLLLSVGGVWA). Disulfide bonds link Cys29/Cys77, Cys43/Cys92, Cys46/Cys130, Cys54/Cys108, Cys58/Cys110, and Cys113/Cys120. N-linked (GlcNAc...) asparagine glycosylation is present at Asn33.

This sequence belongs to the glycoprotein hormones subunit beta family. Heterodimer of a common alpha chain and a unique beta chain which confers biological specificity to thyrotropin, lutropin, follitropin and gonadotropin.

It is found in the secreted. Promotes spermatogenesis and ovulation by stimulating the testes and ovaries to synthesize steroids. The protein is Lutropin subunit beta (LHB1) of Ceratotherium simum (White rhinoceros).